Here is a 247-residue protein sequence, read N- to C-terminus: 3-deoxy-manno-octulosonate cytidylyltransferase (247 aa).

It belongs to the KdsB family.

Its subcellular location is the cytoplasm. The enzyme catalyses 3-deoxy-alpha-D-manno-oct-2-ulosonate + CTP = CMP-3-deoxy-beta-D-manno-octulosonate + diphosphate. It functions in the pathway nucleotide-sugar biosynthesis; CMP-3-deoxy-D-manno-octulosonate biosynthesis; CMP-3-deoxy-D-manno-octulosonate from 3-deoxy-D-manno-octulosonate and CTP: step 1/1. The protein operates within bacterial outer membrane biogenesis; lipopolysaccharide biosynthesis. Its function is as follows. Activates KDO (a required 8-carbon sugar) for incorporation into bacterial lipopolysaccharide in Gram-negative bacteria. In Chlorobium phaeovibrioides (strain DSM 265 / 1930) (Prosthecochloris vibrioformis (strain DSM 265)), this protein is 3-deoxy-manno-octulosonate cytidylyltransferase.